A 237-amino-acid chain; its full sequence is N-(5'-phosphoribosyl)anthranilate isomerase (237 aa).

It belongs to the TrpF family.

The enzyme catalyses N-(5-phospho-beta-D-ribosyl)anthranilate = 1-(2-carboxyphenylamino)-1-deoxy-D-ribulose 5-phosphate. It functions in the pathway amino-acid biosynthesis; L-tryptophan biosynthesis; L-tryptophan from chorismate: step 3/5. This chain is N-(5'-phosphoribosyl)anthranilate isomerase (TRP1), found in Komagataella pastoris (Yeast).